The following is a 291-amino-acid chain: UDP-N-acetylenolpyruvoylglucosamine reductase (291 aa).

Residues 22-187 enclose the FAD-binding PCMH-type domain; sequence RIGGPARYFK…ASATFQLTKD (166 aa). Arginine 166 is a catalytic residue. The Proton donor role is filled by cysteine 214. Glutamate 283 is a catalytic residue.

Belongs to the MurB family. FAD serves as cofactor.

Its subcellular location is the cytoplasm. It catalyses the reaction UDP-N-acetyl-alpha-D-muramate + NADP(+) = UDP-N-acetyl-3-O-(1-carboxyvinyl)-alpha-D-glucosamine + NADPH + H(+). It participates in cell wall biogenesis; peptidoglycan biosynthesis. Cell wall formation. The protein is UDP-N-acetylenolpyruvoylglucosamine reductase of Chlamydia trachomatis serovar L2 (strain ATCC VR-902B / DSM 19102 / 434/Bu).